Reading from the N-terminus, the 257-residue chain is Pyridoxine 5'-phosphate synthase (257 aa).

N6 contributes to the 3-amino-2-oxopropyl phosphate binding site. A 1-deoxy-D-xylulose 5-phosphate-binding site is contributed by 8 to 9; it reads DH. R17 contacts 3-amino-2-oxopropyl phosphate. The active-site Proton acceptor is H41. Residues R43 and H48 each coordinate 1-deoxy-D-xylulose 5-phosphate. The Proton acceptor role is filled by E68. T98 lines the 1-deoxy-D-xylulose 5-phosphate pocket. The active-site Proton donor is H210. 3-amino-2-oxopropyl phosphate contacts are provided by residues G211 and 232-233; that span reads GQ.

This sequence belongs to the PNP synthase family. In terms of assembly, homooctamer; tetramer of dimers.

It localises to the cytoplasm. The enzyme catalyses 3-amino-2-oxopropyl phosphate + 1-deoxy-D-xylulose 5-phosphate = pyridoxine 5'-phosphate + phosphate + 2 H2O + H(+). The protein operates within cofactor biosynthesis; pyridoxine 5'-phosphate biosynthesis; pyridoxine 5'-phosphate from D-erythrose 4-phosphate: step 5/5. Functionally, catalyzes the complicated ring closure reaction between the two acyclic compounds 1-deoxy-D-xylulose-5-phosphate (DXP) and 3-amino-2-oxopropyl phosphate (1-amino-acetone-3-phosphate or AAP) to form pyridoxine 5'-phosphate (PNP) and inorganic phosphate. This Campylobacter jejuni subsp. jejuni serotype O:2 (strain ATCC 700819 / NCTC 11168) protein is Pyridoxine 5'-phosphate synthase.